The sequence spans 86 residues: Sec-independent protein translocase protein TatA (86 aa).

A helical transmembrane segment spans residues 1-21 (MGGISIWQLLIIAVIVVLLFG). The segment at 42-86 (AIGDDNQPQQAQKTSSDADFETKNITEKQSVAQSETSESKNKEQV) is disordered. Polar residues-rich tracts occupy residues 47-58 (NQPQQAQKTSSD) and 68-77 (EKQSVAQSET).

This sequence belongs to the TatA/E family. The Tat system comprises two distinct complexes: a TatABC complex, containing multiple copies of TatA, TatB and TatC subunits, and a separate TatA complex, containing only TatA subunits. Substrates initially bind to the TatABC complex, which probably triggers association of the separate TatA complex to form the active translocon.

It localises to the cell inner membrane. Its function is as follows. Part of the twin-arginine translocation (Tat) system that transports large folded proteins containing a characteristic twin-arginine motif in their signal peptide across membranes. TatA could form the protein-conducting channel of the Tat system. In Photorhabdus laumondii subsp. laumondii (strain DSM 15139 / CIP 105565 / TT01) (Photorhabdus luminescens subsp. laumondii), this protein is Sec-independent protein translocase protein TatA.